The following is a 189-amino-acid chain: ATP synthase subunit delta (189 aa).

It belongs to the ATPase delta chain family. F-type ATPases have 2 components, F(1) - the catalytic core - and F(0) - the membrane proton channel. F(1) has five subunits: alpha(3), beta(3), gamma(1), delta(1), epsilon(1). F(0) has three main subunits: a(1), b(2) and c(10-14). The alpha and beta chains form an alternating ring which encloses part of the gamma chain. F(1) is attached to F(0) by a central stalk formed by the gamma and epsilon chains, while a peripheral stalk is formed by the delta and b chains.

The protein resides in the cell inner membrane. F(1)F(0) ATP synthase produces ATP from ADP in the presence of a proton or sodium gradient. F-type ATPases consist of two structural domains, F(1) containing the extramembraneous catalytic core and F(0) containing the membrane proton channel, linked together by a central stalk and a peripheral stalk. During catalysis, ATP synthesis in the catalytic domain of F(1) is coupled via a rotary mechanism of the central stalk subunits to proton translocation. In terms of biological role, this protein is part of the stalk that links CF(0) to CF(1). It either transmits conformational changes from CF(0) to CF(1) or is implicated in proton conduction. In Methylorubrum populi (strain ATCC BAA-705 / NCIMB 13946 / BJ001) (Methylobacterium populi), this protein is ATP synthase subunit delta.